A 382-amino-acid chain; its full sequence is uncharacterized protein (382 aa).

A run of 12 helical transmembrane segments spans residues 8–28 (VMLL…LNTL), 45–65 (MVSS…GYLI), 75–95 (YLAS…VGFW), 102–122 (FIAG…LMCS), 131–151 (LLAA…LLVS), 157–177 (LLHV…PLLF), 204–224 (LGVN…GLMP), 231–251 (GMAN…GILG), 270–290 (VQVF…AMAP), 291–311 (ALFI…AWAC), 325–345 (ALLL…AMLM), and 349–369 (SDNL…LMLL).

It belongs to the major facilitator superfamily. YcaD (TC 2.A.1.26) family.

It is found in the cell inner membrane. This is an uncharacterized protein from Salmonella agona (strain SL483).